A 96-amino-acid polypeptide reads, in one-letter code: Large ribosomal subunit protein uL23 (96 aa).

The protein belongs to the universal ribosomal protein uL23 family. As to quaternary structure, part of the 50S ribosomal subunit. Contacts protein L29, and trigger factor when it is bound to the ribosome.

One of the early assembly proteins it binds 23S rRNA. One of the proteins that surrounds the polypeptide exit tunnel on the outside of the ribosome. Forms the main docking site for trigger factor binding to the ribosome. The sequence is that of Large ribosomal subunit protein uL23 from Syntrophus aciditrophicus (strain SB).